Consider the following 190-residue polypeptide: uncharacterized protein (190 aa).

This is an uncharacterized protein from Aquifex aeolicus (strain VF5).